The primary structure comprises 657 residues: Glycogen debranching enzyme (657 aa).

The active-site Nucleophile is the Asp336. Glu371 acts as the Proton donor in catalysis. Residues 460 to 479 (ANGEENRDGTNNNYSNNHGK) form a disordered region.

It belongs to the glycosyl hydrolase 13 family.

It carries out the reaction Hydrolysis of (1-&gt;6)-alpha-D-glucosidic linkages to branches with degrees of polymerization of three or four glucose residues in limit dextrin.. Its pathway is glycan degradation; glycogen degradation. Removes maltotriose and maltotetraose chains that are attached by 1,6-alpha-linkage to the limit dextrin main chain, generating a debranched limit dextrin. The polypeptide is Glycogen debranching enzyme (Escherichia coli O81 (strain ED1a)).